Consider the following 52-residue polypeptide: UPF0057 membrane protein YqaE (52 aa).

Helical transmembrane passes span 1–21 (MGFWRIVITIILPPLGVLLGK) and 23–43 (FGWAFIINILLTLLGYIPGLI).

The protein belongs to the UPF0057 (PMP3) family.

It is found in the cell membrane. The chain is UPF0057 membrane protein YqaE (yqaE) from Escherichia coli O157:H7.